We begin with the raw amino-acid sequence, 346 residues long: Fe(3+) ions import ATP-binding protein FbpC 3 (346 aa).

An ABC transporter domain is found at 5-235; the sequence is LEVDGVDKSF…PIDVATAEFI (231 aa). 37-44 provides a ligand contact to ATP; it reads GPSGCGKT.

Belongs to the ABC transporter superfamily. Fe(3+) ion importer (TC 3.A.1.10) family. In terms of assembly, the complex is composed of two ATP-binding proteins (FbpC), two transmembrane proteins (FbpB) and a solute-binding protein (FbpA).

It localises to the cell membrane. It catalyses the reaction Fe(3+)(out) + ATP + H2O = Fe(3+)(in) + ADP + phosphate + H(+). In terms of biological role, part of the ABC transporter complex FbpABC involved in Fe(3+) ions import. Responsible for energy coupling to the transport system. The sequence is that of Fe(3+) ions import ATP-binding protein FbpC 3 from Rhodococcus jostii (strain RHA1).